The sequence spans 196 residues: MADS-box protein FLOWERING LOCUS C (196 aa).

An MADS-box domain is found at 1 to 61 (MGRKKLEIKR…GKLYSFSSGD (61 aa)). Positions 8 to 15 (IKRIENKS) match the Nuclear localization signal motif. One can recognise a K-box domain in the interval 80–170 (ALDHQSKALN…ASQMENNHHV (91 aa)).

As to expression, high expression in the vegetative apex and in root tissue and lower expression in leaves and stems. Not detected in young tissues of the inflorescence. Before fertilization, expressed in ovules, but not in pollen or stamens, of non-vernalized plants. After vernalization, not detected in ovules.

The protein localises to the nucleus. Its function is as follows. Putative transcription factor that seems to play a central role in the regulation of flowering time in the late-flowering phenotype by interacting with 'FRIGIDA', the autonomous and the vernalization flowering pathways. Inhibits flowering by repressing 'SUPPRESSOR OF OVEREXPRESSION OF CONSTANS 1'. At elevated temperatures (e.g. 29 degrees Celsius), maintained at high levels in a JMJ30/JMJ32-dependent manner to prevent extreme precocious flowering. The polypeptide is MADS-box protein FLOWERING LOCUS C (Arabidopsis thaliana (Mouse-ear cress)).